The sequence spans 404 residues: RING-H2 finger protein ATL11 (404 aa).

Residues 1-36 form the signal peptide; sequence MNPKGRTNLNRSIIGGHDHGSILQLLLFLLLLSSHG. Residues 64–84 traverse the membrane as a helical segment; it reads AILMIVLVSVFFFLGFFSVYI. Residues 144-186 form an RING-type; atypical zinc finger; sequence CSVCLNEFEDDETLRLIPKCCHVFHPGCIDAWLRSHTTCPLCR. Disordered stretches follow at residues 339–361 and 385–404; these read PYRT…VRAS and VGEN…SNTV.

The protein belongs to the RING-type zinc finger family. ATL subfamily.

It is found in the membrane. It catalyses the reaction S-ubiquitinyl-[E2 ubiquitin-conjugating enzyme]-L-cysteine + [acceptor protein]-L-lysine = [E2 ubiquitin-conjugating enzyme]-L-cysteine + N(6)-ubiquitinyl-[acceptor protein]-L-lysine.. Its pathway is protein modification; protein ubiquitination. This is RING-H2 finger protein ATL11 (ATL11) from Arabidopsis thaliana (Mouse-ear cress).